The following is a 78-amino-acid chain: Large ribosomal subunit protein bL31 (78 aa).

It belongs to the bacterial ribosomal protein bL31 family. Type A subfamily. Part of the 50S ribosomal subunit.

Functionally, binds the 23S rRNA. The polypeptide is Large ribosomal subunit protein bL31 (rpmE) (Rickettsia typhi (strain ATCC VR-144 / Wilmington)).